Here is a 490-residue protein sequence, read N- to C-terminus: Gram-negative bacteria-binding protein 3 (490 aa).

Residues 1–25 (MADALRFVAWSCCLQLLFLLLGVQG) form the signal peptide. The 101-residue stretch at 26–126 (YEVPKAKIDV…GSFVVNGYSG (101 aa)) folds into the CBM39 domain. Positions 162–490 (TEVNGAPTRC…KIDYVKVYSL (329 aa)) constitute a GH16 domain. Residues N362 and N373 are each glycosylated (N-linked (GlcNAc...) asparagine).

It belongs to the insect beta-1,3-glucan binding protein family.

It is found in the secreted. Involved in the recognition of invading microorganisms. Binds specifically to beta-1,3-glucan and activates the phenoloxidase cascade. In Drosophila melanogaster (Fruit fly), this protein is Gram-negative bacteria-binding protein 3.